The sequence spans 218 residues: Serine/threonine-protein phosphatase 2 (218 aa).

Positions 22, 24, 51, and 77 each coordinate Mn(2+). Histidine 78 acts as the Proton donor in catalysis. Histidine 187 contacts Mn(2+).

It belongs to the PPP phosphatase family. PP-1 subfamily. The cofactor is Mn(2+).

It catalyses the reaction O-phospho-L-seryl-[protein] + H2O = L-seryl-[protein] + phosphate. It carries out the reaction O-phospho-L-threonyl-[protein] + H2O = L-threonyl-[protein] + phosphate. With respect to regulation, inhibited by cadmium, copper, zinc when added activity but with less efficiency. Functionally, can hydrolyze phosphorylated Ser-, Thr- or Tyr-substrates in vitro. The natural substrate is unknown. The protein is Serine/threonine-protein phosphatase 2 (pphB) of Salmonella typhimurium (strain LT2 / SGSC1412 / ATCC 700720).